The primary structure comprises 288 residues: Pyruvate synthase subunit PorB (288 aa).

Residues Cys-16, Cys-19, and Cys-44 each contribute to the [4Fe-4S] cluster site. The span at 137–148 (STPYGASTTTSP) shows a compositional bias: polar residues. The segment at 137-159 (STPYGASTTTSPHGKESFGEDRP) is disordered. Residues 149 to 159 (HGKESFGEDRP) are compositionally biased toward basic and acidic residues. A [4Fe-4S] cluster-binding site is contributed by Cys-208.

In terms of assembly, heterotetramer of one alpha, one beta, one delta and one gamma chain. Requires [4Fe-4S] cluster as cofactor.

It catalyses the reaction 2 oxidized [2Fe-2S]-[ferredoxin] + pyruvate + CoA = 2 reduced [2Fe-2S]-[ferredoxin] + acetyl-CoA + CO2 + H(+). The chain is Pyruvate synthase subunit PorB (porB) from Methanothermobacter marburgensis (strain ATCC BAA-927 / DSM 2133 / JCM 14651 / NBRC 100331 / OCM 82 / Marburg) (Methanobacterium thermoautotrophicum).